A 251-amino-acid polypeptide reads, in one-letter code: Ell1-associated factor 1 (251 aa).

2 disordered regions span residues 110–187 and 201–251; these read SKTV…DMEV and FDQE…EDED. Over residues 112 to 123 the composition is skewed to polar residues; that stretch reads TVPSNAITQSDN. Residues 124 to 135 are compositionally biased toward low complexity; sequence SQISESKSTSQS. Basic and acidic residues predominate over residues 143–157; it reads RRKEKELEASKDGKI. Composition is skewed to polar residues over residues 204 to 220 and 236 to 251; these read EFNS…TASK and SSAQ…EDED. Ser-247 is subject to Phosphoserine.

Belongs to the EAF family. In terms of assembly, forms a stable heterodimer with ell1. Ell1-eaf1 complex interacts with RNA polymerase II.

It localises to the nucleus. In terms of biological role, activates transcription elongation by RNA polymerase II and pyrophosphorolysis as a complex with ell1. Acts as a transcriptional transactivator of ell1 elongation activities. The protein is Ell1-associated factor 1 (eaf1) of Schizosaccharomyces pombe (strain 972 / ATCC 24843) (Fission yeast).